We begin with the raw amino-acid sequence, 296 residues long: Large ribosomal subunit protein uL15m (296 aa).

Residues 1 to 21 (MAGPLQGGGARALDLLRGLPR) constitute a mitochondrion transit peptide. Residues 22–66 (VSLANLKPNPGSKKPERRPRGRRRGRKCGRGHKGERQRGTRPRLG) are disordered. Residues 36-52 (PERRPRGRRRGRKCGRG) are compositionally biased toward basic residues.

It belongs to the universal ribosomal protein uL15 family. As to quaternary structure, component of the mitochondrial large ribosomal subunit (mt-LSU). Mature mammalian 55S mitochondrial ribosomes consist of a small (28S) and a large (39S) subunit. The 28S small subunit contains a 12S ribosomal RNA (12S mt-rRNA) and 30 different proteins. The 39S large subunit contains a 16S rRNA (16S mt-rRNA), a copy of mitochondrial valine transfer RNA (mt-tRNA(Val)), which plays an integral structural role, and 52 different proteins.

Its subcellular location is the mitochondrion. The protein is Large ribosomal subunit protein uL15m (MRPL15) of Homo sapiens (Human).